The following is a 128-amino-acid chain: Small ribosomal subunit protein uS11 (128 aa).

It belongs to the universal ribosomal protein uS11 family. As to quaternary structure, part of the 30S ribosomal subunit. Interacts with proteins S7 and S18. Binds to IF-3.

Functionally, located on the platform of the 30S subunit, it bridges several disparate RNA helices of the 16S rRNA. Forms part of the Shine-Dalgarno cleft in the 70S ribosome. The sequence is that of Small ribosomal subunit protein uS11 from Desulfatibacillum aliphaticivorans.